The chain runs to 518 residues: Phenylacetate 2-hydroxylase (518 aa).

Position 437 (cysteine 437) interacts with heme.

This sequence belongs to the cytochrome P450 family.

The enzyme catalyses 2-phenylacetate + reduced [NADPH--hemoprotein reductase] + O2 = (2-hydroxyphenyl)acetate + oxidized [NADPH--hemoprotein reductase] + H2O + H(+). Its pathway is aromatic compound metabolism; phenylacetate degradation. In terms of biological role, catalyzes the hydroxylation of phenylacetate to 2-hydroxyphenylacetate in the homogentisate pathway. The homogentisate pathway is used to catabolize phenylacetate and use it as a carbon source. Can also catalyze the hydroxylation of 3-hydroxyphenylacetate to 2,5-dihydroxyphenylacetate (homogentisate) at low efficiency. The polypeptide is Phenylacetate 2-hydroxylase (phacA) (Emericella nidulans (Aspergillus nidulans)).